The chain runs to 348 residues: Probable dual-specificity RNA methyltransferase RlmN (348 aa).

The Proton acceptor role is filled by Glu-92. The region spanning 98–331 is the Radical SAM core domain; that stretch reads HPDRVTACIS…NEIRREKGTD (234 aa). Cys-105 and Cys-336 are joined by a disulfide. [4Fe-4S] cluster contacts are provided by Cys-112, Cys-116, and Cys-119. Residues 159-160, Ser-191, 214-216, and Asn-290 each bind S-adenosyl-L-methionine; these read GE and SLH. The active-site S-methylcysteine intermediate is the Cys-336.

This sequence belongs to the radical SAM superfamily. RlmN family. [4Fe-4S] cluster is required as a cofactor.

Its subcellular location is the cytoplasm. The enzyme catalyses adenosine(2503) in 23S rRNA + 2 reduced [2Fe-2S]-[ferredoxin] + 2 S-adenosyl-L-methionine = 2-methyladenosine(2503) in 23S rRNA + 5'-deoxyadenosine + L-methionine + 2 oxidized [2Fe-2S]-[ferredoxin] + S-adenosyl-L-homocysteine. It catalyses the reaction adenosine(37) in tRNA + 2 reduced [2Fe-2S]-[ferredoxin] + 2 S-adenosyl-L-methionine = 2-methyladenosine(37) in tRNA + 5'-deoxyadenosine + L-methionine + 2 oxidized [2Fe-2S]-[ferredoxin] + S-adenosyl-L-homocysteine. Its function is as follows. Specifically methylates position 2 of adenine 2503 in 23S rRNA and position 2 of adenine 37 in tRNAs. This is Probable dual-specificity RNA methyltransferase RlmN from Fervidobacterium nodosum (strain ATCC 35602 / DSM 5306 / Rt17-B1).